Reading from the N-terminus, the 88-residue chain is Small ribosomal subunit protein uS17 (88 aa).

This sequence belongs to the universal ribosomal protein uS17 family. As to quaternary structure, part of the 30S ribosomal subunit.

One of the primary rRNA binding proteins, it binds specifically to the 5'-end of 16S ribosomal RNA. The polypeptide is Small ribosomal subunit protein uS17 (Methylorubrum extorquens (strain PA1) (Methylobacterium extorquens)).